We begin with the raw amino-acid sequence, 523 residues long: Cysteine-rich secretory protein LCCL domain-containing 1 (523 aa).

The N-terminal stretch at 1-23 is a signal peptide; the sequence is MKYVVQEWLRITTLLFIAQAVSA. The 141-residue stretch at 66 to 206 folds into the SCP domain; it reads LDLHNKLRGQ…PKAVYLVCNY (141 aa). Residues 246–298 are disordered; it reads ERPYSPHEPEEETNEIERQRSKAQDATAQSRPRTHSPSGSTGSEDSEKNEVIS. Positions 269–288 are enriched in polar residues; sequence QDATAQSRPRTHSPSGSTGS. 2 LCCL domains span residues 302–397 and 403–505; these read MSQI…ANSF and TVQA…PGKQ. 4 cysteine pairs are disulfide-bonded: C308–C326, C330–C350, C409–C431, and C435–C458.

It belongs to the CRISP family.

It is found in the secreted. This Gallus gallus (Chicken) protein is Cysteine-rich secretory protein LCCL domain-containing 1 (CRISPLD1).